Consider the following 905-residue polypeptide: DNA gyrase subunit A (905 aa).

Residues 35–524 (IPDVRDGLKP…GEFDQDIEDL (490 aa)) form the Topo IIA-type catalytic domain. Tyrosine 123 functions as the O-(5'-phospho-DNA)-tyrosine intermediate in the catalytic mechanism. A GyrA-box motif is present at residues 551 to 557 (QKRGGKG). A disordered region spans residues 882-905 (IAESSDDNEEDSEFEEEVAEEGSE). Positions 885–905 (SSDDNEEDSEFEEEVAEEGSE) are enriched in acidic residues.

It belongs to the type II topoisomerase GyrA/ParC subunit family. In terms of assembly, heterotetramer, composed of two GyrA and two GyrB chains. In the heterotetramer, GyrA contains the active site tyrosine that forms a transient covalent intermediate with DNA, while GyrB binds cofactors and catalyzes ATP hydrolysis.

It is found in the cytoplasm. The catalysed reaction is ATP-dependent breakage, passage and rejoining of double-stranded DNA.. A type II topoisomerase that negatively supercoils closed circular double-stranded (ds) DNA in an ATP-dependent manner to modulate DNA topology and maintain chromosomes in an underwound state. Negative supercoiling favors strand separation, and DNA replication, transcription, recombination and repair, all of which involve strand separation. Also able to catalyze the interconversion of other topological isomers of dsDNA rings, including catenanes and knotted rings. Type II topoisomerases break and join 2 DNA strands simultaneously in an ATP-dependent manner. The protein is DNA gyrase subunit A of Rickettsia bellii (strain RML369-C).